The primary structure comprises 354 residues: Chorismate synthase (354 aa).

Positions 48 and 54 each coordinate NADP(+). Residues 125-127 (RSS), 238-239 (NA), Gly-278, 293-297 (KPTSS), and Arg-319 each bind FMN.

Belongs to the chorismate synthase family. As to quaternary structure, homotetramer. The cofactor is FMNH2.

It carries out the reaction 5-O-(1-carboxyvinyl)-3-phosphoshikimate = chorismate + phosphate. It participates in metabolic intermediate biosynthesis; chorismate biosynthesis; chorismate from D-erythrose 4-phosphate and phosphoenolpyruvate: step 7/7. Catalyzes the anti-1,4-elimination of the C-3 phosphate and the C-6 proR hydrogen from 5-enolpyruvylshikimate-3-phosphate (EPSP) to yield chorismate, which is the branch point compound that serves as the starting substrate for the three terminal pathways of aromatic amino acid biosynthesis. This reaction introduces a second double bond into the aromatic ring system. The polypeptide is Chorismate synthase (Blochmanniella pennsylvanica (strain BPEN)).